A 163-amino-acid polypeptide reads, in one-letter code: Nodulin-13 (163 aa).

Positions 68 and 82 each coordinate kinetin. Residues Gln-68 and Tyr-82 each coordinate N(6)-dimethylallyladenine. The trans-zeatin site is built by Gln-68, Tyr-82, and Tyr-133.

It belongs to the BetVI family. As to quaternary structure, homodimer. Expressed in nodules, but not in leaves, stems, flowers and roots. Specifically located in the nodule cortex.

Functionally, may be involved in nodule organogenesis rather in the processes related to nitrogen fixation or interactions with the bacteria. May regulate nodulation by controlling the levels of freely available cytokinins. The sequence is that of Nodulin-13 (N13) from Medicago truncatula (Barrel medic).